A 572-amino-acid polypeptide reads, in one-letter code: Putative two-component response regulator ARR13 (572 aa).

Residues 17 to 134 (NVMVVDDNRV…DLPKIYQFAL (118 aa)) form the Response regulatory domain. A 4-aspartylphosphate modification is found at Asp-71. The segment at 175 to 225 (KKNCSSKSDTRTVNSTNVSHVSTNGSRKNRKRKPKGGPSDDGESLSQPPKK) is disordered. The segment covering 179 to 197 (SSKSDTRTVNSTNVSHVST) has biased composition (polar residues). Residues 224–227 (KKKK) carry the Nuclear localization signal motif. Positions 227 to 277 (KIWWTNPLQDLFLQAIQHIGYDKVVPKKILAIMNVPYLTRENVASHLQKYR) form a DNA-binding region, myb-like GARP. Over residues 509-522 (NQDQSNGESSNTIA) the composition is skewed to polar residues. The segment at 509 to 531 (NQDQSNGESSNTIATPETNTPNF) is disordered.

The protein belongs to the ARR family. Type-B subfamily. As to quaternary structure, binds the target DNA as a monomer. In terms of processing, two-component system major event consists of a His-to-Asp phosphorelay between a sensor histidine kinase (HK) and a response regulator (RR). In plants, the His-to-Asp phosphorelay involves an additional intermediate named Histidine-containing phosphotransfer protein (HPt). This multistep phosphorelay consists of a His-Asp-His-Asp sequential transfer of a phosphate group between first a His and an Asp of the HK protein, followed by the transfer to a conserved His of the HPt protein and finally the transfer to an Asp in the receiver domain of the RR protein.

It is found in the nucleus. Putative transcriptional activator that binds specifically to the DNA sequence 5'-[AG]GATT-3'. Functions as a response regulator involved in His-to-Asp phosphorelay signal transduction system. Phosphorylation of the Asp residue in the receiver domain activates the ability of the protein to promote the transcription of target genes. Could directly activate some type-A response regulators in response to cytokinins. The chain is Putative two-component response regulator ARR13 (ARR13) from Arabidopsis thaliana (Mouse-ear cress).